Reading from the N-terminus, the 103-residue chain is Pseudonajatoxin b homolog (103 aa).

An N-terminal signal peptide occupies residues 1-21 (MKTLLLTLVVVTIVCLDLGYT). 5 disulfides stabilise this stretch: Cys-24-Cys-42, Cys-35-Cys-63, Cys-48-Cys-52, Cys-67-Cys-79, and Cys-80-Cys-85.

Belongs to the three-finger toxin family. Long-chain subfamily. Type II alpha-neurotoxin sub-subfamily. As to expression, expressed by the venom gland.

It is found in the secreted. Binds with high affinity to muscular (alpha-1/CHRNA1) and neuronal (alpha-7/CHRNA7) nicotinic acetylcholine receptor (nAChR) and inhibits acetylcholine from binding to the receptor, thereby impairing neuromuscular and neuronal transmission. This Pseudonaja textilis (Eastern brown snake) protein is Pseudonajatoxin b homolog.